A 135-amino-acid polypeptide reads, in one-letter code: PTS system sorbose-specific EIIA component (135 aa).

Positions 1-131 constitute a PTS EIIA type-4 domain; sequence MVHAIFCAHG…CVVWQQPETV (131 aa). The active-site Tele-phosphohistidine intermediate is His9. His9 carries the phosphohistidine; by HPr modification.

The protein localises to the cytoplasm. Functionally, the phosphoenolpyruvate-dependent sugar phosphotransferase system (PTS), a major carbohydrate active transport system, catalyzes the phosphorylation of incoming sugar substrates concomitant with their translocation across the cell membrane. The enzyme II SorABFM PTS system is involved in L-sorbose transport. This Klebsiella pneumoniae protein is PTS system sorbose-specific EIIA component.